Here is a 557-residue protein sequence, read N- to C-terminus: MESESSRRMGNACIPLKRIAYFLCLFSVVLLTEGKKPAKPKCPAVCTCSKDNALCENARSIPRTVPPDVISLSFVRSGFTEISEGSFLFTPSLQLLLFTSNSFDVISDDAFIGLPHLEYLFIENNNIKSISRHTFRGLKSLIHLSLANNNLQTLPKDIFKGLDSLTNVDLRGNAFNCDCKLKWLVEWLGHTNATVEDIYCEGPPEYKKRKINSLSPKDFDCIITEFAKSQDLPYQSLSIDTFSYLNDEYVVIAQPFTGKCIFLEWDHVEKTFRNYDNITGTSTVVCKPIVIDTQLYVIVAQLFGGSHIYKRDGFANKFIKIQDIEVLKIRKPNDIETFKIEDNWYFVVADSSKAGFTTIYKWNGNGFYSHQSLHAWYRDTDVEYLEIARPPLALRTPHLILSSSSQRPVIYQWSKATQLFTNQTDIPNMEDVYAVKHFSVKGDVYICLTRFIGDSKVMKWGGSSFQDIQRMPSRGSMVFQPLQINNYQYAILGSDYSFTQVYNWDAEKAKFVKFQELNVQAPRSFTHVSINKRNFLFASSFKGNTQIYKHVIVDLSA.

An N-terminal signal peptide occupies residues 1-34 (MESESSRRMGNACIPLKRIAYFLCLFSVVLLTEG). The LRRNT domain maps to 35–72 (KKPAKPKCPAVCTCSKDNALCENARSIPRTVPPDVISL). 3 LRR repeats span residues 92-113 (SLQL…AFIG), 116-137 (HLEY…TFRG), and 140-161 (SLIH…IFKG). One can recognise an LRRCT domain in the interval 173-223 (NAFNCDCKLKWLVEWLGHTNATVEDIYCEGPPEYKKRKINSLSPKDFDCII). Asparagine 192 carries N-linked (GlcNAc...) asparagine glycosylation. 7 EAR repeats span residues 225 to 267 (EFAK…EWDH), 271 to 313 (TFRN…KRDG), 317 to 364 (KFIK…KWNG), 366 to 415 (GFYS…QWSK), 419 to 462 (LFTN…KWGG), 464 to 506 (SFQD…NWDA), and 510 to 552 (KFVK…KHVI). Asparagine 277 carries N-linked (GlcNAc...) asparagine glycosylation. The N-linked (GlcNAc...) asparagine glycan is linked to asparagine 422.

As to quaternary structure, oligomer. Interacts with KCNA1 within a complex containing KCNA1, KCNA4 and KCNAB1. Part of a complex containing ADAM22, DLG4/PSD95 and CACNG2 (stargazin). Can bind to ADAM11 and ADAM23. Post-translationally, glycosylated. Expressed in the brain (at protein level). Expressed in cerebellar cortex basket cell terminals (at protein level). Highly expressed in the dentate gyrus and CA3 field of the hippocampus.

The protein localises to the secreted. Its subcellular location is the synapse. The protein resides in the cytoplasm. It is found in the golgi apparatus. It localises to the endoplasmic reticulum. In terms of biological role, regulates voltage-gated potassium channels assembled from KCNA1, KCNA4 and KCNAB1. It slows down channel inactivation by precluding channel closure mediated by the KCNAB1 subunit. Ligand for ADAM22 that positively regulates synaptic transmission mediated by AMPA-type glutamate receptors. Plays a role in suppressing the production of MMP1/3 through the phosphatidylinositol 3-kinase/ERK pathway. The polypeptide is Leucine-rich glioma-inactivated protein 1 (Mus musculus (Mouse)).